We begin with the raw amino-acid sequence, 152 residues long: TOMM20-like protein 1 (152 aa).

At 1–9 (MPSVRSLLR) the chain is on the mitochondrial intermembrane side. Residues 10-29 (LLAAAAACGAFAFLGYCIYL) form a helical membrane-spanning segment. Residues 30 to 152 (NRKRRGDPAF…EQDCLEDDPD (123 aa)) lie on the Cytoplasmic side of the membrane. The disordered stretch occupies residues 43–62 (LRDKRRAEPQKAEEQGTQLW). The span at 47–56 (RRAEPQKAEE) shows a compositional bias: basic and acidic residues.

It belongs to the Tom20 family.

It localises to the mitochondrion outer membrane. The protein is TOMM20-like protein 1 (TOMM20L) of Homo sapiens (Human).